A 394-amino-acid polypeptide reads, in one-letter code: Elongation factor Tu (394 aa).

The tr-type G domain maps to Lys10–Val204. The segment at Gly19–Thr26 is G1. Gly19–Thr26 is a GTP binding site. Position 26 (Thr26) interacts with Mg(2+). The G2 stretch occupies residues Gly60–Lys64. Positions Asp81–Gly84 are G3. GTP-binding positions include Asp81 to His85 and Asn136 to Asp139. A G4 region spans residues Asn136–Asp139. The tract at residues Ser174 to Leu176 is G5.

Belongs to the TRAFAC class translation factor GTPase superfamily. Classic translation factor GTPase family. EF-Tu/EF-1A subfamily. As to quaternary structure, monomer.

It localises to the cytoplasm. It catalyses the reaction GTP + H2O = GDP + phosphate + H(+). In terms of biological role, GTP hydrolase that promotes the GTP-dependent binding of aminoacyl-tRNA to the A-site of ribosomes during protein biosynthesis. This chain is Elongation factor Tu, found in Onion yellows phytoplasma (strain OY-M).